The following is a 497-amino-acid chain: SPI-2 type 3 secretion system secretin (497 aa).

Positions 1 to 20 are cleaved as a signal peptide; sequence MVVNKRLILILLFILNTAKS.

Belongs to the bacterial secretin family. T3SS SctC subfamily. The core secretion machinery of the T3SS is composed of approximately 20 different proteins, including cytoplasmic components, a base, an export apparatus and a needle. This subunit is part of the base, which anchors the injectisome in the bacterial cell envelope. Forms a stable homooligomeric complex.

It localises to the cell outer membrane. Functionally, component of the type III secretion system (T3SS), also called injectisome, which is used to inject bacterial effector proteins into eukaryotic host cells. Forms a ring-shaped multimeric structure with an apparent central pore in the outer membrane. Required for secretion of some type III-secreted effectors including the SpvB exotoxin. This is SPI-2 type 3 secretion system secretin from Salmonella typhimurium (strain 14028s / SGSC 2262).